Here is a 332-residue protein sequence, read N- to C-terminus: DNA repair and recombination protein RadA (332 aa).

126-133 (GEFGSGKT) contacts ATP.

It belongs to the eukaryotic RecA-like protein family.

In terms of biological role, involved in DNA repair and in homologous recombination. Binds and assemble on single-stranded DNA to form a nucleoprotein filament. Hydrolyzes ATP in a ssDNA-dependent manner and promotes DNA strand exchange between homologous DNA molecules. The protein is DNA repair and recombination protein RadA of Pyrobaculum calidifontis (strain DSM 21063 / JCM 11548 / VA1).